Reading from the N-terminus, the 413-residue chain is NAD-dependent dihydropyrimidine dehydrogenase subunit PreT homolog (413 aa).

Glu287 is an NAD(+) binding site.

Belongs to the NADH dehydrogenase family. Heterotetramer of 2 PreA and 2 PreT subunits.

It carries out the reaction 5,6-dihydrouracil + NAD(+) = uracil + NADH + H(+). The catalysed reaction is 5,6-dihydrothymine + NAD(+) = thymine + NADH + H(+). Involved in pyrimidine base degradation. Catalyzes physiologically the reduction of uracil to 5,6-dihydrouracil (DHU) by using NADH as a specific cosubstrate. It also catalyzes the reverse reaction and the reduction of thymine to 5,6-dihydrothymine (DHT). In Salmonella typhi, this protein is NAD-dependent dihydropyrimidine dehydrogenase subunit PreT homolog (preT).